We begin with the raw amino-acid sequence, 322 residues long: Secreted RxLR effector protein RXLR-C17 (322 aa).

Positions 1 to 25 are cleaved as a signal peptide; it reads MREPAFSFRLHLFAAMILLVDVFSA. A RxLR-dEER motif is present at residues 43–62; that stretch reads RQLRARDSQAKNYVIRDEER. N73 carries an N-linked (GlcNAc...) asparagine glycan.

Belongs to the RxLR effector family.

It localises to the secreted. It is found in the host cytoplasm. Its subcellular location is the host nucleus. In terms of biological role, secreted effector that suppresses pattern-triggered immunity (PTI) in plant host. The chain is Secreted RxLR effector protein RXLR-C17 from Plasmopara halstedii (Downy mildew of sunflower).